We begin with the raw amino-acid sequence, 104 residues long: U20-lycotoxin-Ls1c (104 aa).

Residues 1-30 (MFSTSDQVSKMNSRILSALLILGIATCVIA) form the signal peptide. The region spanning 31 to 76 (GGFCPKSRHPQCDLSYKINDCCAQSDCRVGSVCCVEGCGNVCRAES) is the WAP domain. Cystine bridges form between Cys34-Cys64, Cys42-Cys68, Cys51-Cys63, Cys52-Cys90, and Cys57-Cys72.

The protein belongs to the venom protein 11 family. 02 (wap-2) subfamily. Post-translationally, contains 5 disulfide bonds. Expressed by the venom gland.

It is found in the secreted. In terms of biological role, has antibacterial activity. This chain is U20-lycotoxin-Ls1c, found in Lycosa singoriensis (Wolf spider).